The following is a 226-amino-acid chain: UPF0319 protein YpAngola_A3206 (226 aa).

Positions 1 to 20 (MKLGLVAGMLAVCFSFSSVA) are cleaved as a signal peptide.

This sequence belongs to the UPF0319 family.

The protein is UPF0319 protein YpAngola_A3206 of Yersinia pestis bv. Antiqua (strain Angola).